A 171-amino-acid polypeptide reads, in one-letter code: CDP-archaeol synthase (171 aa).

A run of 4 helical transmembrane segments spans residues 11–31 (VLYV…GLVF), 65–85 (VGLV…IGVI), 129–149 (LILV…IMLI), and 151–171 (LVLH…DVWY).

This sequence belongs to the CDP-archaeol synthase family. Mg(2+) serves as cofactor.

The protein localises to the cell membrane. The catalysed reaction is 2,3-bis-O-(geranylgeranyl)-sn-glycerol 1-phosphate + CTP + H(+) = CDP-2,3-bis-O-(geranylgeranyl)-sn-glycerol + diphosphate. The protein operates within membrane lipid metabolism; glycerophospholipid metabolism. In terms of biological role, catalyzes the formation of CDP-2,3-bis-(O-geranylgeranyl)-sn-glycerol (CDP-archaeol) from 2,3-bis-(O-geranylgeranyl)-sn-glycerol 1-phosphate (DGGGP) and CTP. This reaction is the third ether-bond-formation step in the biosynthesis of archaeal membrane lipids. This Methanothermobacter thermautotrophicus (strain ATCC 29096 / DSM 1053 / JCM 10044 / NBRC 100330 / Delta H) (Methanobacterium thermoautotrophicum) protein is CDP-archaeol synthase.